The following is a 614-amino-acid chain: Spastin (614 aa).

Positions 1–45 (MNSPGGRGKKKGSGGPSSPVPPRPPPPCQARSRPAPKPAPPPQSP) are disordered. The segment at 1-50 (MNSPGGRGKKKGSGGPSSPVPPRPPPPCQARSRPAPKPAPPPQSPHKRNL) is required for nuclear localization. The Cytoplasmic segment spans residues 1-56 (MNSPGGRGKKKGSGGPSSPVPPRPPPPCQARSRPAPKPAPPPQSPHKRNLYYFSYP). A required for interaction with ATL1 region spans residues 1–80 (MNSPGGRGKK…LGLLFVWLCQ (80 aa)). The segment at 1–192 (MNSPGGRGKK…LVMAKDRLQL (192 aa)) is required for midbody localization. A required for interaction with RTN1 region spans residues 1–298 (MNSPGGRGKK…STPKTNRTNK (298 aa)). The Nuclear localization signal signature appears at 4-11 (PGGRGKKK). Composition is skewed to pro residues over residues 18 to 28 (SPVPPRPPPPC) and 35 to 44 (APKPAPPPQS). Residues 50-87 (LYYFSYPLFLGFALLRLVAFHLGLLFVWLCQRFSRALM) form a required for interaction with SSNA1 and microtubules region. An intramembrane region (helical) is located at residues 57–77 (LFLGFALLRLVAFHLGLLFVW). A Nuclear export signal motif is present at residues 59–67 (LGFALLRLV). Over 78–614 (LCQRFSRALM…WNKDFGDTTV (537 aa)) the chain is Cytoplasmic. Residues 110-194 (EAERVRAFHK…MAKDRLQLLE (85 aa)) form a sufficient for interaction with CHMP1B region. The tract at residues 112–198 (ERVRAFHKQA…RLQLLEKLQP (87 aa)) is required for interaction with microtubules. The region spanning 118–193 (HKQAFEYISV…VMAKDRLQLL (76 aa)) is the MIT domain. Residues 220–310 (NGHLQSESGA…TPTTAARKKK (91 aa)) form a disordered region. A sufficient for microtubule severing region spans residues 226-614 (ESGAVPKRKD…WNKDFGDTTV (389 aa)). A phosphoserine mark is found at serine 243 and serine 266. Residues 268-326 (SGLSMVSGVRQGPGSAAATHKSTPKTNRTNKPSTPTTAARKKKDLKNFRNVDSNLANLI) form a required for interaction with microtubules and microtubule severing region. The segment covering 287 to 304 (HKSTPKTNRTNKPSTPTT) has biased composition (polar residues). Position 304 is a phosphothreonine (threonine 304). The Nuclear localization signal signature appears at 307–310 (RKKK). ATP is bound at residue 380–387 (GPPGNGKT). Serine 595 bears the Phosphoserine mark.

This sequence belongs to the AAA ATPase family. Spastin subfamily. In terms of assembly, homohexamer. Mostly monomeric, but assembles into hexameric structure for short periods of time. Oligomerization seems to be a prerequisite for catalytic activity. Binding to ATP in a cleft between two adjacent subunits stabilizes the homohexameric form. Binds to microtubules at least in part via the alpha-tubulin and beta-tubulin tails. The hexamer adopts a ring conformation through which microtubules pass prior to being severed. Does not interact strongly with tubulin heterodimers. Interacts (via MIT domain) with CHMP1B; the interaction is direct. Interacts with SSNA1. Interacts with ATL1. Interacts with RTN1. Interacts with ZFYVE27. Interacts with REEP1. Interacts (via MIT domain) with IST1.

Its subcellular location is the membrane. It localises to the endoplasmic reticulum. The protein localises to the midbody. It is found in the cytoplasm. The protein resides in the cytoskeleton. Its subcellular location is the microtubule organizing center. It localises to the centrosome. The protein localises to the perinuclear region. It is found in the nucleus. The protein resides in the spindle. Its subcellular location is the cell projection. It localises to the axon. The catalysed reaction is n ATP + n H2O + a microtubule = n ADP + n phosphate + (n+1) alpha/beta tubulin heterodimers.. With respect to regulation, allosteric enzyme with a cooperative mechanism; at least two neighbor subunits influence each other strongly in spastin hexamers. Microtubule binding promotes cooperative interactions among spastin subunits. ATP-dependent microtubule severing protein that specifically recognizes and cuts microtubules that are polyglutamylated. Preferentially recognizes and acts on microtubules decorated with short polyglutamate tails: severing activity increases as the number of glutamates per tubulin rises from one to eight, but decreases beyond this glutamylation threshold. Severing activity is not dependent on tubulin acetylation or detyrosination. Microtubule severing promotes reorganization of cellular microtubule arrays and the release of microtubules from the centrosome following nucleation. It is critical for the biogenesis and maintenance of complex microtubule arrays in axons, spindles and cilia. SPAST is involved in abscission step of cytokinesis and nuclear envelope reassembly during anaphase in cooperation with the ESCRT-III complex. Recruited at the midbody, probably by IST1, and participates in membrane fission during abscission together with the ESCRT-III complex. Recruited to the nuclear membrane by IST1 and mediates microtubule severing, promoting nuclear envelope sealing and mitotic spindle disassembly during late anaphase. Required for membrane traffic from the endoplasmic reticulum (ER) to the Golgi and endosome recycling. Recruited by IST1 to endosomes and regulates early endosomal tubulation and recycling by mediating microtubule severing. Probably plays a role in axon growth and the formation of axonal branches. This Bos taurus (Bovine) protein is Spastin.